We begin with the raw amino-acid sequence, 1402 residues long: DNA-directed RNA polymerase subunit beta' (1402 aa).

Zn(2+)-binding residues include cysteine 71, cysteine 73, cysteine 86, and cysteine 89. Aspartate 462, aspartate 464, and aspartate 466 together coordinate Mg(2+). The Zn(2+) site is built by cysteine 808, cysteine 881, cysteine 888, and cysteine 891.

Belongs to the RNA polymerase beta' chain family. In terms of assembly, the RNAP catalytic core consists of 2 alpha, 1 beta, 1 beta' and 1 omega subunit. When a sigma factor is associated with the core the holoenzyme is formed, which can initiate transcription. Requires Mg(2+) as cofactor. The cofactor is Zn(2+).

It catalyses the reaction RNA(n) + a ribonucleoside 5'-triphosphate = RNA(n+1) + diphosphate. DNA-dependent RNA polymerase catalyzes the transcription of DNA into RNA using the four ribonucleoside triphosphates as substrates. The chain is DNA-directed RNA polymerase subunit beta' from Hyphomonas neptunium (strain ATCC 15444).